Reading from the N-terminus, the 86-residue chain is Small ribosomal subunit protein bS20 (86 aa).

The segment at 1–25 (MANIKSQMKRIKTNEANRQRNKAVK) is disordered.

It belongs to the bacterial ribosomal protein bS20 family.

Its function is as follows. Binds directly to 16S ribosomal RNA. This chain is Small ribosomal subunit protein bS20, found in Saccharopolyspora erythraea (strain ATCC 11635 / DSM 40517 / JCM 4748 / NBRC 13426 / NCIMB 8594 / NRRL 2338).